A 218-amino-acid chain; its full sequence is Large ribosomal subunit protein uL1 (218 aa).

The protein belongs to the universal ribosomal protein uL1 family. Part of the 50S ribosomal subunit.

Functionally, binds directly to 23S rRNA. Probably involved in E site tRNA release. Protein L1 is also a translational repressor protein, it controls the translation of its operon by binding to its mRNA. The polypeptide is Large ribosomal subunit protein uL1 (Metallosphaera sedula (strain ATCC 51363 / DSM 5348 / JCM 9185 / NBRC 15509 / TH2)).